The sequence spans 428 residues: 3-phosphoshikimate 1-carboxyvinyltransferase (428 aa).

3-phosphoshikimate-binding residues include lysine 19, serine 20, and arginine 24. Phosphoenolpyruvate is bound at residue lysine 19. Glycine 91 and arginine 119 together coordinate phosphoenolpyruvate. 4 residues coordinate 3-phosphoshikimate: serine 164, glutamine 166, aspartate 312, and lysine 339. Glutamine 166 is a phosphoenolpyruvate binding site. Residue aspartate 312 is the Proton acceptor of the active site. The phosphoenolpyruvate site is built by arginine 343 and arginine 386.

The protein belongs to the EPSP synthase family. Monomer.

The protein resides in the cytoplasm. It carries out the reaction 3-phosphoshikimate + phosphoenolpyruvate = 5-O-(1-carboxyvinyl)-3-phosphoshikimate + phosphate. Its pathway is metabolic intermediate biosynthesis; chorismate biosynthesis; chorismate from D-erythrose 4-phosphate and phosphoenolpyruvate: step 6/7. In terms of biological role, catalyzes the transfer of the enolpyruvyl moiety of phosphoenolpyruvate (PEP) to the 5-hydroxyl of shikimate-3-phosphate (S3P) to produce enolpyruvyl shikimate-3-phosphate and inorganic phosphate. This is 3-phosphoshikimate 1-carboxyvinyltransferase from Bacillus pumilus (strain SAFR-032).